A 700-amino-acid chain; its full sequence is MANGWTGNILRVNLTTGNITLEDSSKFKSFVGGMGFGYKIMYDEVPPGTKPFDEANKLVFATGPLTGSGAPCSSRVNITSLSTFTKGNLVVDAHMGGFFAAQMKFAGYDVIIIEGKAKSPVWLKIKDDKVSLEKADFLWGKGTRATTEEICRLTSPETCVAAIGQAGENLVPLSGMLNSRNHSGGAGTGAIMGSKNLKAIAVEGTKGVNIADRQEMKRLNDYMMTELIGANNNHVVPSTPQSWAEYSDPKSRWTARKGLFWGAAEGGPIETGEIPPGNQNTVGFRTYKSVFDLGPAAEKYTVKMSGCHSCPIRCMTQMNIPRVKEFGVPSTGGNTCVANFVHTTIFPNGPKDFEDKDDGRVIGNLVGLNLFDDYGLWCNYGQLHRDFTYCYSKGVFKRVLPAEEYAEIRWDQLEAGDVNFIKDFYYRLAHRVGELSHLADGSYAIAERWNLGEEYWGYAKNKLWSPFGYPVHHANEASAQVGSIVNCMFNRDCMTHTHINFIGSGLPLKLQREVAKELFGSEDAYDETKNYTPINDAKIKYAKWSLLRVCLHNAVTLCNWVWPMTVSPLKSRNYRGDLALEAKFFKAITGEEMTQEKLDLAAERIFTLHRAYTVKLMQTKDMRNEHDLICSWVFDKDPQIPVFTEGTDKMDRDDMHASLTMFYKEMGWDPQLGCPTRETLQRLGLEDIAADLAAHNLLPA.

Residues cysteine 307, cysteine 310, cysteine 314, and cysteine 558 each coordinate [4Fe-4S] cluster.

This sequence belongs to the AOR/FOR family. Requires [4Fe-4S] cluster as cofactor. The cofactor is Mo-molybdopterin. Tungstopterin is required as a cofactor.

This is an uncharacterized protein from Escherichia coli (strain K12).